The sequence spans 395 residues: NAD(P)H-quinone oxidoreductase subunit H, chloroplastic (395 aa).

Belongs to the complex I 49 kDa subunit family. As to quaternary structure, NDH is composed of at least 16 different subunits, 5 of which are encoded in the nucleus.

Its subcellular location is the plastid. It is found in the chloroplast thylakoid membrane. The enzyme catalyses a plastoquinone + NADH + (n+1) H(+)(in) = a plastoquinol + NAD(+) + n H(+)(out). The catalysed reaction is a plastoquinone + NADPH + (n+1) H(+)(in) = a plastoquinol + NADP(+) + n H(+)(out). Functionally, NDH shuttles electrons from NAD(P)H:plastoquinone, via FMN and iron-sulfur (Fe-S) centers, to quinones in the photosynthetic chain and possibly in a chloroplast respiratory chain. The immediate electron acceptor for the enzyme in this species is believed to be plastoquinone. Couples the redox reaction to proton translocation, and thus conserves the redox energy in a proton gradient. In Dioscorea elephantipes (Elephant's foot yam), this protein is NAD(P)H-quinone oxidoreductase subunit H, chloroplastic.